The sequence spans 357 residues: MADAATIAKLDEGFKKLEAATDCKSLLKKYLTKDVFEQLKAKKTKLGATLLDVIQSGVENLDSGVGVYAPDAEAYTLFSPLFDPIIEDYHKGFKQTDKHPNKDFGDVTQFVNVDPDGKFVISTRVRCGRSMEGYPFNPCLTEAQYKEMESKVSSTLSNLEGELKGTYFPLTGMTKEVQQKLIDDHFLFKEGDRFLQAANACRYWPAGRGIYHNDNKTFLVWCNEEDHLRIISMQMGGDLGQVYRRLVSAVNEIEKRVPFSHHDRLGFLTFCPTNLGTTVRASVHIKLPKLAANREKLEEVAGRYSLQVRGTRGEHTEAEGGIYDISNKRRMGLTEFQAVKEMQDGILELIKIEKEMQ.

The residue at position 2 (Ala-2) is an N-acetylalanine. Positions Lys-9–Lys-91 constitute a Phosphagen kinase N-terminal domain. Gly-64–Tyr-68 contacts L-arginine. One can recognise a Phosphagen kinase C-terminal domain in the interval Phe-119–Met-356. Residues Ser-122 to Arg-126 and His-185 contribute to the ATP site. An L-arginine-binding site is contributed by Glu-225. An ATP-binding site is contributed by Arg-229. Residue Cys-271 coordinates L-arginine. ATP is bound by residues Arg-280–His-284 and Arg-309–Glu-314. Glu-314 lines the L-arginine pocket.

The protein belongs to the ATP:guanido phosphotransferase family.

It catalyses the reaction L-arginine + ATP = N(omega)-phospho-L-arginine + ADP + H(+). This is Arginine kinase from Eriocheir sinensis (Chinese mitten crab).